The primary structure comprises 331 residues: MISFSSFYQQIADSNLQHWLETLPSILGKWQRDHKHGNLPKWEKVLNKLHYPAPDQVDFVDSVTVGSGEQLSPGEKEKLENLLRLFMPWRKGPFHIHGIHIDTEWRSDWKWDRVKQHISPLKNRTVLDVGCGSGYHMWRMLGSGAKRVVGIDPSPLFLCQFEAVKRLAGTHHPVHLLPLGIEELPPLDAFDTVFSMGVLYHRRSPIDHLLQLRDQLRTGGELVLETLVIDGDENAVLVPQDRYGKMNNVWFIPSVAALMLWLKKCDFTDIRCVDTDVTALAEQRRTDWMPNESLVEYLDPNDITKTVEGYPAPKRATIIAVKNQPNQDLIS.

Carboxy-S-adenosyl-L-methionine-binding positions include K91, W105, K110, G130, 152 to 154, 181 to 182, M196, Y200, and R315; these read DPS and IE.

It belongs to the class I-like SAM-binding methyltransferase superfamily. CmoB family. Homotetramer.

The catalysed reaction is carboxy-S-adenosyl-L-methionine + 5-hydroxyuridine(34) in tRNA = 5-carboxymethoxyuridine(34) in tRNA + S-adenosyl-L-homocysteine + H(+). Its function is as follows. Catalyzes carboxymethyl transfer from carboxy-S-adenosyl-L-methionine (Cx-SAM) to 5-hydroxyuridine (ho5U) to form 5-carboxymethoxyuridine (cmo5U) at position 34 in tRNAs. This Shewanella baltica (strain OS185) protein is tRNA U34 carboxymethyltransferase.